The primary structure comprises 223 residues: MSHRIDNLPNVFNLPFKPNFACELDLQKQGFLYIAGVDEVGRGPLAGPVVTAAVILDKNRIPDGLNDSKKLSAQRRYELYHEILQSALAISIASLCARTIDQSDIRKATLEAMRRCIRGLAVPAHYALVDGRDIPFQLPCPATALIKGDQRSVSIAAASIIAKVTRDQMMECAGQVYKGYGLEKHVGYATLAHRAALEKYGPVVGLHRYSFAPLKKRYRDYMS.

The RNase H type-2 domain maps to 32–223 (LYIAGVDEVG…LKKRYRDYMS (192 aa)). The a divalent metal cation site is built by aspartate 38, glutamate 39, and aspartate 130.

The protein belongs to the RNase HII family. Requires Mn(2+) as cofactor. It depends on Mg(2+) as a cofactor.

Its subcellular location is the cytoplasm. It carries out the reaction Endonucleolytic cleavage to 5'-phosphomonoester.. Functionally, endonuclease that specifically degrades the RNA of RNA-DNA hybrids. The sequence is that of Ribonuclease HII from Bartonella henselae (strain ATCC 49882 / DSM 28221 / CCUG 30454 / Houston 1) (Rochalimaea henselae).